The sequence spans 659 residues: DNA ligase (659 aa).

Residues 32 to 36 (DAEYD), 81 to 82 (SL), and Glu110 each bind NAD(+). Lys112 acts as the N6-AMP-lysine intermediate in catalysis. Arg133, Glu168, Lys284, and Lys308 together coordinate NAD(+). Zn(2+) is bound by residues Cys402, Cys405, Cys420, and Cys425. Residues 582–659 (AKPQIFAGKS…SEEEFAELLP (78 aa)) form the BRCT domain.

This sequence belongs to the NAD-dependent DNA ligase family. LigA subfamily. Requires Mg(2+) as cofactor. Mn(2+) is required as a cofactor.

The enzyme catalyses NAD(+) + (deoxyribonucleotide)n-3'-hydroxyl + 5'-phospho-(deoxyribonucleotide)m = (deoxyribonucleotide)n+m + AMP + beta-nicotinamide D-nucleotide.. DNA ligase that catalyzes the formation of phosphodiester linkages between 5'-phosphoryl and 3'-hydroxyl groups in double-stranded DNA using NAD as a coenzyme and as the energy source for the reaction. It is essential for DNA replication and repair of damaged DNA. This is DNA ligase from Desulfitobacterium hafniense (strain DSM 10664 / DCB-2).